Here is a 232-residue protein sequence, read N- to C-terminus: PsbP domain-containing protein 2, chloroplastic (232 aa).

The transit peptide at 1–34 directs the protein to the chloroplast; the sequence is MWSQSFLGSAPKLCLFSSSLPPFSHHKIHKFFCF. Residues 35–71 constitute a thylakoid transit peptide; that stretch reads AQNPSSTVSINLSKRHLNLSILTLFFNGFLLDNKAKS.

This sequence belongs to the PsbP family.

It is found in the plastid. The protein resides in the chloroplast thylakoid lumen. In Arabidopsis thaliana (Mouse-ear cress), this protein is PsbP domain-containing protein 2, chloroplastic (PPD2).